Reading from the N-terminus, the 913-residue chain is MESLKSPVFLLILHLLEGVLSESLIQLNNNGYEGIVIAIDHDVPEDEALIQHIKDMVTQASPYLFEATGKRFYFKNVAILIPESWKAKPEYTRPKLETFKNADVLVSTTSPLGNDEPYTEHIGACGEKGIRIHLTPDFLAGKKLTQYGPQDRTFVHEWAHFRWGVFNEYNNDEKFYLSKGKPQAVRCSAAITGKNQVRRCQGGSCITNGKCVIDRVTGLYKDNCVFVPDPHQNEKASIMFNQNINSVVEFCTEKNHNQEAPNDQNQRCNLRSTWEVIQESEDFKQTTPMTAQPPAPTFSLLQIGQRIVCLVLDKSGSMLNDDRLNRMNQASRLFLLQTVEQGSWVGMVTFDSAAYVQSELKQLNSGADRDLLIKHLPTVSAGGTSICSGLRTAFTVIKKKYPTDGSEIVLLTDGEDNTISSCFDLVKQSGAIIHTVALGPAAAKELEQLSKMTGGLQTYSSDQVQNNGLVDAFAALSSGNAAIAQHSIQLESRGVNLQNNQWMNGSVIVDSSVGKDTLFLITWTTHPPTIFIWDPSGVEQNGFILDTTTKVAYLQVPGTAKVGFWKYSIQASSQTLTLTVTSRAASATLPPITVTPVVNKNTGKFPSPVTVYASIRQGASPILRASVTALIESVNGKTVTLELLDNGAGADATKNDGVYSRFFTAFDANGRYSVKIWALGGVTSDRQRAAPPKNRAMYIDGWIEDGEVRMNPPRPETSYVQDKQLCFSRTSSGGSFVATNVPAAAPIPDLFPPCQITDLKASIQGQNLVNLTWTAPGDDYDHGRASNYIIRMSTSIVDLRDHFNTSLQVNTTGLIPKEASSEEIFEFELGGNTFGNGTDIFIAIQAVDKSNLKSEISNIARVSVFIPAQEPPIPEDSTPPCPDISINSTIPGIHVLKIMWKWLGEMQVTLGLH.

The signal sequence occupies residues 1–21; sequence MESLKSPVFLLILHLLEGVLS. The segment at 46-199 is metalloprotease domain; it reads DEALIQHIKD…AITGKNQVRR (154 aa). His-156 is a binding site for Zn(2+). The active site involves Glu-157. Residues His-160 and Asn-167 each coordinate Zn(2+). A VWFA domain is found at 307 to 476; that stretch reads IVCLVLDKSG…NGLVDAFAAL (170 aa). 6 N-linked (GlcNAc...) asparagine glycosylation sites follow: Asn-504, Asn-770, Asn-804, Asn-810, Asn-836, and Asn-887.

This sequence belongs to the CLCR family. The 110 kDa translation product is autoproteolytically cleaved by the metalloprotease domain in the endoplasmic reticulum into a 75 kDa N-terminal and a 35 kDa C-terminal products that remain physically associated with each other. The cleavage is necessary for calcium-activated chloride channel (CaCC) activation activity. Post-translationally, glycosylated. Exclusively expressed in the digestive and respiratory tracts and in the uterus (at protein level). Expressed in small intestine, colon, stomach, and uterus and slightly expressed in trachea tissue. Exclusively expressed in the mucin granule membranes of gastrointestinal, respiratory, and uterine goblet cells and other mucin-producing cells. In the colon, expressed in the surface mucous cells. In the stomach highly expressed in the surface epithelium in the pylorus. Strongly expressed in the airway epithelium of lung tissues associated with airway hyperresponsiveness (AHR).

The protein resides in the secreted. It is found in the extracellular space. In terms of biological role, may be involved in mediating calcium-activated chloride conductance. May play critical roles in goblet cell metaplasia, mucus hypersecretion, cystic fibrosis and AHR. May be involved in the regulation of mucus production and/or secretion by goblet cells. Involved in the regulation of tissue inflammation in the innate immune response. May play a role as a tumor suppressor. Induces MUC5AC. The chain is Calcium-activated chloride channel regulator 1 (Clca1) from Mus musculus (Mouse).